Reading from the N-terminus, the 244-residue chain is 1-(5-phosphoribosyl)-5-[(5-phosphoribosylamino)methylideneamino] imidazole-4-carboxamide isomerase (244 aa).

Asp8 functions as the Proton acceptor in the catalytic mechanism. Asp129 serves as the catalytic Proton donor.

Belongs to the HisA/HisF family.

The protein resides in the cytoplasm. The enzyme catalyses 1-(5-phospho-beta-D-ribosyl)-5-[(5-phospho-beta-D-ribosylamino)methylideneamino]imidazole-4-carboxamide = 5-[(5-phospho-1-deoxy-D-ribulos-1-ylimino)methylamino]-1-(5-phospho-beta-D-ribosyl)imidazole-4-carboxamide. The protein operates within amino-acid biosynthesis; L-histidine biosynthesis; L-histidine from 5-phospho-alpha-D-ribose 1-diphosphate: step 4/9. The sequence is that of 1-(5-phosphoribosyl)-5-[(5-phosphoribosylamino)methylideneamino] imidazole-4-carboxamide isomerase from Bradyrhizobium sp. (strain ORS 278).